Consider the following 272-residue polypeptide: Imidazole glycerol phosphate synthase subunit HisF (272 aa).

Active-site residues include D11 and D130.

This sequence belongs to the HisA/HisF family. Heterodimer of HisH and HisF.

It localises to the cytoplasm. The catalysed reaction is 5-[(5-phospho-1-deoxy-D-ribulos-1-ylimino)methylamino]-1-(5-phospho-beta-D-ribosyl)imidazole-4-carboxamide + L-glutamine = D-erythro-1-(imidazol-4-yl)glycerol 3-phosphate + 5-amino-1-(5-phospho-beta-D-ribosyl)imidazole-4-carboxamide + L-glutamate + H(+). The protein operates within amino-acid biosynthesis; L-histidine biosynthesis; L-histidine from 5-phospho-alpha-D-ribose 1-diphosphate: step 5/9. Functionally, IGPS catalyzes the conversion of PRFAR and glutamine to IGP, AICAR and glutamate. The HisF subunit catalyzes the cyclization activity that produces IGP and AICAR from PRFAR using the ammonia provided by the HisH subunit. This chain is Imidazole glycerol phosphate synthase subunit HisF, found in Methanococcus maripaludis (strain DSM 14266 / JCM 13030 / NBRC 101832 / S2 / LL).